Here is a 249-residue protein sequence, read N- to C-terminus: Demethylmenaquinone methyltransferase (249 aa).

Residues Thr-67, Asp-87, and 115 to 116 contribute to the S-adenosyl-L-methionine site; that span reads DA.

It belongs to the class I-like SAM-binding methyltransferase superfamily. MenG/UbiE family.

The catalysed reaction is a 2-demethylmenaquinol + S-adenosyl-L-methionine = a menaquinol + S-adenosyl-L-homocysteine + H(+). The protein operates within quinol/quinone metabolism; menaquinone biosynthesis; menaquinol from 1,4-dihydroxy-2-naphthoate: step 2/2. Its function is as follows. Methyltransferase required for the conversion of demethylmenaquinol (DMKH2) to menaquinol (MKH2). The sequence is that of Demethylmenaquinone methyltransferase from Leptospira interrogans serogroup Icterohaemorrhagiae serovar copenhageni (strain Fiocruz L1-130).